A 346-amino-acid chain; its full sequence is Cyclin-dependent kinase 20 (346 aa).

A Protein kinase domain is found at tyrosine 4–phenylalanine 288. Residues isoleucine 10 to valine 18 and lysine 33 each bind ATP. The active-site Proton acceptor is aspartate 127. A disordered region spans residues serine 298–histidine 324. Positions proline 303–proline 318 are enriched in pro residues.

It belongs to the protein kinase superfamily. CMGC Ser/Thr protein kinase family. CDC2/CDKX subfamily. Monomer. Interacts with MAK. Interacts with TBC1D32.

It is found in the nucleus. It localises to the cytoplasm. The protein resides in the cell projection. The protein localises to the cilium. It carries out the reaction L-seryl-[protein] + ATP = O-phospho-L-seryl-[protein] + ADP + H(+). The catalysed reaction is L-threonyl-[protein] + ATP = O-phospho-L-threonyl-[protein] + ADP + H(+). Its function is as follows. Involved in cell growth. Activates CDK2, a kinase involved in the control of the cell cycle, by phosphorylating residue 'Thr-160'. Required for high-level Shh responses in the developing neural tube. Together with TBC1D32, controls the structure of the primary cilium by coordinating assembly of the ciliary membrane and axoneme, allowing GLI2 to be properly activated in response to SHH signaling. The protein is Cyclin-dependent kinase 20 (Cdk20) of Mus musculus (Mouse).